Here is a 385-residue protein sequence, read N- to C-terminus: Rhomboid domain-containing protein 3 (385 aa).

Transmembrane regions (helical) follow at residues 13-33, 58-78, 95-115, 146-166, and 168-188; these read ALPL…LLGA, LGHT…TLGW, VLAL…VSGA, WLLP…PPFL, and LLCG…WLEL. The disordered stretch occupies residues 238–264; the sequence is PPYLASSDSWPHSDGSAQLPPRLGPGQ. The UBA domain maps to 322-361; sequence SVSSLRLQQLQHMGFPTEQAAVALAATGRVEGAVSLLVEG.

It localises to the membrane. The sequence is that of Rhomboid domain-containing protein 3 (Rhbdd3) from Mus musculus (Mouse).